The sequence spans 296 residues: MARDARKRTSSNFPQLPPAPDDYPTFPDTSTWPVVFPELPAAPYGGPCRPPQHTSKAAAPRIPADRLPNHVAIVMDGNGRWATQRGLARTEGHKMGEAVVIDIACGAIELGIKWLSLYAFSTENWKRSPEEVRFLMGFNRDVVRRRRDTLKKLGVRIRWVGSRPRLWRSVINELAVAEEMTKSNDVITINYCVNYGGRTEITEATREIAREVAAGRLNPERITESTIARHLQRPDIPDVDLFLRTSGEQRSSNFMLWQAAYAEYIFQDKLWPDYDRRDLWAACEEYASRTRRFGSA.

Residues 1–24 form a disordered region; that stretch reads MARDARKRTSSNFPQLPPAPDDYP. Residue Asp76 is part of the active site. Asp76 is a binding site for Mg(2+). Residues 76–80, Trp81, Arg89, His93, 121–124, Trp125, Arg127, Arg168, Arg244, and 250–252 each bind substrate; these read DGNGR, STEN, and RSS. The active-site Proton acceptor is the Asn124. Residue Glu263 coordinates Mg(2+). Substrate is bound at residue 292 to 294; it reads RFG.

This sequence belongs to the UPP synthase family. As to quaternary structure, homodimer. The cofactor is Mg(2+). It depends on Mn(2+) as a cofactor.

It is found in the cell membrane. The enzyme catalyses (2Z,6E)-farnesyl diphosphate + 7 isopentenyl diphosphate = (2Z,6Z,10Z,14Z,18Z,22Z,26Z,30Z,34E)-decaprenyl diphosphate + 7 diphosphate. It catalyses the reaction n isopentenyl diphosphate + (2E,6E)-farnesyl diphosphate = a di-trans,poly-cis-polyprenyl diphosphate + n diphosphate. Activated by dithiothreitol and inhibited by EDTA. Functionally, catalyzes the sequential condensation of isopentenyl diphosphate (IPP) in the cis configuration with (2Z,6E)-farnesyl diphosphate (Z-FPP or EZ-FPP) generating the 50 carbon product trans,polycis-decaprenyl diphosphate. When (2E,6E)-farnesyl diphosphate (E-FPP or EE-FPP) is used in vitro, both primary products decaprenyl diphosphate and (2E,6E,10E)-geranylgeranyl diphosphate (EEE-GGPP) are synthesized. M.tuberculosis does not synthesize (2E,6E,10Z)-geranylgeranyl diphosphate (EEZ-GGPP) and heptaprenyl diphosphate. Can also accept many different allylic substrates, including E-geranyl diphosphate (E-GPP), neryl diphosphate (NPP), and all-trans-geranyl-geranyl diphosphate. In Mycobacterium tuberculosis (strain ATCC 25618 / H37Rv), this protein is Decaprenyl diphosphate synthase (uppS).